Here is a 613-residue protein sequence, read N- to C-terminus: tRNA 5-methylaminomethyl-2-thiouridine biosynthesis bifunctional protein MnmC (613 aa).

Residues 1–225 (MKKAKLIFKD…KREMIKAYLE (225 aa)) form a tRNA (mnm(5)s(2)U34)-methyltransferase region. The FAD-dependent cmnm(5)s(2)U34 oxidoreductase stretch occupies residues 252–613 (IGAGISSAVL…FLVRKLKKGL (362 aa)).

The protein in the N-terminal section; belongs to the methyltransferase superfamily. tRNA (mnm(5)s(2)U34)-methyltransferase family. This sequence in the C-terminal section; belongs to the DAO family. FAD is required as a cofactor.

It localises to the cytoplasm. The catalysed reaction is 5-aminomethyl-2-thiouridine(34) in tRNA + S-adenosyl-L-methionine = 5-methylaminomethyl-2-thiouridine(34) in tRNA + S-adenosyl-L-homocysteine + H(+). Functionally, catalyzes the last two steps in the biosynthesis of 5-methylaminomethyl-2-thiouridine (mnm(5)s(2)U) at the wobble position (U34) in tRNA. Catalyzes the FAD-dependent demodification of cmnm(5)s(2)U34 to nm(5)s(2)U34, followed by the transfer of a methyl group from S-adenosyl-L-methionine to nm(5)s(2)U34, to form mnm(5)s(2)U34. This chain is tRNA 5-methylaminomethyl-2-thiouridine biosynthesis bifunctional protein MnmC, found in Campylobacter jejuni subsp. doylei (strain ATCC BAA-1458 / RM4099 / 269.97).